The following is a 152-amino-acid chain: MNITRILGVVTTVVILYSVQVTAQFFGDVQQAMRCVAKLMPCQPYIHLSIPPPPLCCNPMKQIAEKDVSCLCTAFKHPDLLRFLALTKENAIKILDSCGINHDPSVCNKTNPSSPAALPEAATSGNSFSTKKNTALAITFFGFSFVFLGMII.

A signal peptide spans 1 to 23; it reads MNITRILGVVTTVVILYSVQVTA. Cystine bridges form between cysteine 42-cysteine 56, cysteine 57-cysteine 98, and cysteine 70-cysteine 107. N-linked (GlcNAc...) asparagine glycosylation occurs at asparagine 108. Serine 124 carries the GPI-anchor amidated serine lipid modification. Positions 125 to 152 are cleaved as a propeptide — removed in mature form; that stretch reads GNSFSTKKNTALAITFFGFSFVFLGMII.

This sequence belongs to the plant LTP family.

Its subcellular location is the cell membrane. In terms of biological role, probable lipid transfer protein. The protein is Non-specific lipid transfer protein GPI-anchored 8 of Arabidopsis thaliana (Mouse-ear cress).